A 423-amino-acid polypeptide reads, in one-letter code: Protein CLP1 homolog (423 aa).

ATP contacts are provided by residues E19, K60, and 122–127; that span reads DVGKTT.

Belongs to the Clp1 family. Clp1 subfamily.

Its subcellular location is the nucleus. Functionally, required for endonucleolytic cleavage during polyadenylation-dependent pre-mRNA 3'-end formation. The protein is Protein CLP1 homolog (cbc) of Culex quinquefasciatus (Southern house mosquito).